Here is an 804-residue protein sequence, read N- to C-terminus: Endoplasmin (804 aa).

The N-terminal stretch at 1–21 (MRALWVLGLCCVLLTFGSVRA) is a signal peptide. Positions 42–44 (SRT) match the SRT pseudosubstrate motif motif. The N-linked (GlcNAc...) asparagine glycan is linked to Asn62. At Ser64 the chain carries Phosphoserine. N-linked (GlcNAc...) asparagine glycosylation is present at Asn107. 3 residues coordinate ATP: Asn107, Asp149, and Asn162. N6-(2-hydroxyisobutyryl)lysine is present on Lys168. Ser172 carries the post-translational modification Phosphoserine. Phe199 is a binding site for ATP. Asn217 carries N-linked (GlcNAc...) asparagine glycosylation. Thr288 bears the Phosphothreonine; by CK2 mark. The segment at 288-323 (TVEEPMEEEEAAKEEKEDSDDEAAVEEEEEEKKPKT) is disordered. Acidic residues predominate over residues 289 to 317 (VEEPMEEEEAAKEEKEDSDDEAAVEEEEE). A Phosphoserine; by CK2 modification is found at Ser306. At Ser403 the chain carries Phosphoserine. Position 404 is an N6-succinyllysine (Lys404). An N-linked (GlcNAc...) asparagine glycan is attached at Asn445. Ser447 carries the post-translational modification Phosphoserine. Lys479 carries the N6-acetyllysine modification. N-linked (GlcNAc...) asparagine glycosylation is found at Asn481 and Asn502. Lys633 carries the N6-succinyllysine modification. Residues 750–804 (DPDAKVEEEPEEEPEETTEDTTEDTEQDDEEEMDAGTDDEEQETVKKSTAEKDEL) form a disordered region. Residues 757 to 791 (EEPEEEPEETTEDTTEDTEQDDEEEMDAGTDDEEQ) show a composition bias toward acidic residues. A phosphothreonine; by CK2 mark is found at Thr766, Thr770, Thr774, and Thr786. Over residues 792–804 (ETVKKSTAEKDEL) the composition is skewed to basic and acidic residues. The short motif at 801–804 (KDEL) is the Prevents secretion from ER element.

Belongs to the heat shock protein 90 family. As to quaternary structure, homodimer; disulfide-linked. Component of an EIF2 complex at least composed of CELF1/CUGBP1, CALR, CALR3, EIF2S1, EIF2S2, HSP90B1 and HSPA5. Part of a large chaperone multiprotein complex comprising DNAJB11, HSP90B1, HSPA5, HYOU, PDIA2, PDIA4, PDIA6, PPIB, SDF2L1, UGGT1 and very small amounts of ERP29, but not, or at very low levels, CALR nor CANX. Interacts with AIMP1; regulates its retention in the endoplasmic reticulum. Hyperglycosylated form interacts with OS9; promoting its degradation by the endoplasmic reticulum associated degradation (ERAD). Interacts with CNPY3. This interaction is disrupted in the presence of ATP. Interacts with TLR4 and TLR9, but not with TLR3. Interacts with MZB1 in a calcium-dependent manner. Interacts with METTL23. Interacts with IL1B; the interaction facilitates cargo translocation into the ERGIC. Interacts with EIF2AK3. Post-translationally, phosphorylated by CK2. In terms of processing, N-glycosylated cotranslationally at Asn-217 by STT3A-containing OST-A complex: this glycosylation is constitutive. In response to various stress, 5 additional facultative sites (Asn-62, Asn-107, Asn-445, Asn-481 and Asn-502) can be glycosylated post-translationally by STT3B-containing OST-B complex, leading to a hyperglycosylated form that is degraded by the ER-associated degradation (ERAD) pathway. In normal conditions, the OST-A complex together with CCDC134 prevent glycosylation at facultative sites during protein folding, thereby preventing hyperglycosylation. Mechanistically, nascent HSP90B1 is tethered during translation to a specialized CCDC134-containing translocon that forms a microenvironment for its folding, in which STT3A associates with the SRT pseudosubstrate motif, and prevents access to facultative glycosylation sites until folding is completed, rendering its facultative sites inaccessible to the OST-B complex. Detected in heart muscle (at protein level).

The protein localises to the endoplasmic reticulum lumen. The protein resides in the sarcoplasmic reticulum lumen. It localises to the melanosome. The catalysed reaction is ATP + H2O = ADP + phosphate + H(+). Its function is as follows. ATP-dependent chaperone involved in the processing of proteins in the endoplasmic reticulum, regulating their transport. Together with MESD, acts as a modulator of the Wnt pathway by promoting the folding of LRP6, a coreceptor of the canonical Wnt pathway. When associated with CNPY3, required for proper folding of Toll-like receptors. Promotes folding and trafficking of TLR4 to the cell surface. May participate in the unfolding of cytosolic leaderless cargos (lacking the secretion signal sequence) such as the interleukin 1/IL-1 to facilitate their translocation into the ERGIC (endoplasmic reticulum-Golgi intermediate compartment) and secretion; the translocation process is mediated by the cargo receptor TMED10. May also function in endoplasmic reticulum associated degradation (ERAD); it is however unclear whether it participates to ERAD or is a target of ERAD. The polypeptide is Endoplasmin (HSP90B1) (Canis lupus familiaris (Dog)).